Consider the following 201-residue polypeptide: 3-isopropylmalate dehydratase small subunit (201 aa).

Belongs to the LeuD family. LeuD type 1 subfamily. In terms of assembly, heterodimer of LeuC and LeuD.

The enzyme catalyses (2R,3S)-3-isopropylmalate = (2S)-2-isopropylmalate. The protein operates within amino-acid biosynthesis; L-leucine biosynthesis; L-leucine from 3-methyl-2-oxobutanoate: step 2/4. Catalyzes the isomerization between 2-isopropylmalate and 3-isopropylmalate, via the formation of 2-isopropylmaleate. The polypeptide is 3-isopropylmalate dehydratase small subunit (Shewanella piezotolerans (strain WP3 / JCM 13877)).